Here is a 172-residue protein sequence, read N- to C-terminus: Ribosome maturation factor RimM (172 aa).

The PRC barrel domain occupies aspartate 93–methionine 167.

The protein belongs to the RimM family. In terms of assembly, binds ribosomal protein uS19.

The protein localises to the cytoplasm. Its function is as follows. An accessory protein needed during the final step in the assembly of 30S ribosomal subunit, possibly for assembly of the head region. Essential for efficient processing of 16S rRNA. May be needed both before and after RbfA during the maturation of 16S rRNA. It has affinity for free ribosomal 30S subunits but not for 70S ribosomes. The protein is Ribosome maturation factor RimM of Exiguobacterium sp. (strain ATCC BAA-1283 / AT1b).